Consider the following 273-residue polypeptide: MATAARLLPKIQSPASPAVAEARRRRPSSLRLGVTSGPARTLKQKLVAKSAVSVVEGENAFDGVKQDTRPIIVIDNYDSFTYNLCQYMGEVGANFEVYRNDDITVEEIKKISPRGILISPGPGTPQDSGISLQTVQDLGPSTPLFGVCMGLQCIGEAFGGKVVRSPYGVVHGKGSLVHYEEKLDGTLFSGLPNPFQAGRYHSLVIEKDSFPHDALEITAWTDDGLIMAARHRKYKHIQGVQFHPESIITTEGRLMVKNFIKIIEGYEALNCLP.

The N-terminal 47 residues, 1-47, are a transit peptide targeting the chloroplast; the sequence is MATAARLLPKIQSPASPAVAEARRRRPSSLRLGVTSGPARTLKQKLV. A disordered region spans residues 15–35; the sequence is ASPAVAEARRRRPSSLRLGVT. The 200-residue stretch at 70–269 folds into the Glutamine amidotransferase type-1 domain; the sequence is PIIVIDNYDS…IKIIEGYEAL (200 aa). 121-123 contributes to the L-glutamine binding site; the sequence is GPG. C148 functions as the Nucleophile in the catalytic mechanism. L-glutamine is bound by residues Q152 and 202 to 203; that span reads SL. Residues H243 and E245 contribute to the active site.

As to quaternary structure, heterotetramer consisting of two non-identical subunits: a beta subunit and a large alpha subunit. As to expression, expressed in roots and leaves.

It localises to the plastid. It is found in the chloroplast. It catalyses the reaction chorismate + L-glutamine = anthranilate + pyruvate + L-glutamate + H(+). The protein operates within amino-acid biosynthesis; L-tryptophan biosynthesis; L-tryptophan from chorismate: step 1/5. In terms of biological role, part of a heterotetrameric complex that catalyzes the two-step biosynthesis of anthranilate, an intermediate in the biosynthesis of L-tryptophan. In the first step, the glutamine-binding beta subunit of anthranilate synthase (AS) provides the glutamine amidotransferase activity which generates ammonia as a substrate that, along with chorismate, is used in the second step, catalyzed by the large alpha subunit of AS to produce anthranilate. This chain is Anthranilate synthase beta subunit 2, chloroplastic, found in Oryza sativa subsp. japonica (Rice).